Consider the following 122-residue polypeptide: Holo-[acyl-carrier-protein] synthase (122 aa).

Positions 9 and 58 each coordinate Mg(2+).

This sequence belongs to the P-Pant transferase superfamily. AcpS family. It depends on Mg(2+) as a cofactor.

It is found in the cytoplasm. The catalysed reaction is apo-[ACP] + CoA = holo-[ACP] + adenosine 3',5'-bisphosphate + H(+). In terms of biological role, transfers the 4'-phosphopantetheine moiety from coenzyme A to a Ser of acyl-carrier-protein. The protein is Holo-[acyl-carrier-protein] synthase of Chlamydia caviae (strain ATCC VR-813 / DSM 19441 / 03DC25 / GPIC) (Chlamydophila caviae).